The following is a 55-amino-acid chain: Photosystem II reaction center protein K (55 aa).

Residues 1-18 (MFYIHLENTFDLSSTILV) constitute a propeptide that is removed on maturation. A helical membrane pass occupies residues 26–46 (IFDPIVDVMPIIPLFFFLLAF).

The protein belongs to the PsbK family. PSII is composed of 1 copy each of membrane proteins PsbA, PsbB, PsbC, PsbD, PsbE, PsbF, PsbH, PsbI, PsbJ, PsbK, PsbL, PsbM, PsbT, PsbX, PsbY, PsbZ, Psb30/Ycf12, at least 3 peripheral proteins of the oxygen-evolving complex and a large number of cofactors. It forms dimeric complexes.

Its subcellular location is the plastid. It localises to the chloroplast thylakoid membrane. Functionally, one of the components of the core complex of photosystem II (PSII). PSII is a light-driven water:plastoquinone oxidoreductase that uses light energy to abstract electrons from H(2)O, generating O(2) and a proton gradient subsequently used for ATP formation. It consists of a core antenna complex that captures photons, and an electron transfer chain that converts photonic excitation into a charge separation. This chain is Photosystem II reaction center protein K, found in Anthoceros angustus (Hornwort).